The following is a 211-amino-acid chain: Thiamine-phosphate synthase (211 aa).

Residues Gln37 to Lys41 and Asn69 each bind 4-amino-2-methyl-5-(diphosphooxymethyl)pyrimidine. Mg(2+)-binding residues include Asp70 and Asp89. A 4-amino-2-methyl-5-(diphosphooxymethyl)pyrimidine-binding site is contributed by Ser108. Ser135 to Thr137 contacts 2-[(2R,5Z)-2-carboxy-4-methylthiazol-5(2H)-ylidene]ethyl phosphate. Lys138 provides a ligand contact to 4-amino-2-methyl-5-(diphosphooxymethyl)pyrimidine. Residues Gly165 and Leu185 to Ser186 each bind 2-[(2R,5Z)-2-carboxy-4-methylthiazol-5(2H)-ylidene]ethyl phosphate.

This sequence belongs to the thiamine-phosphate synthase family. The cofactor is Mg(2+).

The enzyme catalyses 2-[(2R,5Z)-2-carboxy-4-methylthiazol-5(2H)-ylidene]ethyl phosphate + 4-amino-2-methyl-5-(diphosphooxymethyl)pyrimidine + 2 H(+) = thiamine phosphate + CO2 + diphosphate. It catalyses the reaction 2-(2-carboxy-4-methylthiazol-5-yl)ethyl phosphate + 4-amino-2-methyl-5-(diphosphooxymethyl)pyrimidine + 2 H(+) = thiamine phosphate + CO2 + diphosphate. The catalysed reaction is 4-methyl-5-(2-phosphooxyethyl)-thiazole + 4-amino-2-methyl-5-(diphosphooxymethyl)pyrimidine + H(+) = thiamine phosphate + diphosphate. Its pathway is cofactor biosynthesis; thiamine diphosphate biosynthesis; thiamine phosphate from 4-amino-2-methyl-5-diphosphomethylpyrimidine and 4-methyl-5-(2-phosphoethyl)-thiazole: step 1/1. In terms of biological role, condenses 4-methyl-5-(beta-hydroxyethyl)thiazole monophosphate (THZ-P) and 2-methyl-4-amino-5-hydroxymethyl pyrimidine pyrophosphate (HMP-PP) to form thiamine monophosphate (TMP). In Thiobacillus denitrificans (strain ATCC 25259 / T1), this protein is Thiamine-phosphate synthase.